A 658-amino-acid polypeptide reads, in one-letter code: UvrABC system protein B (658 aa).

One can recognise a Helicase ATP-binding domain in the interval 25–178; that stretch reads KSLKNKNHYQ…KSFLLKLVEM (154 aa). Position 38–45 (38–45) interacts with ATP; sequence GVTGSGKT. A Beta-hairpin motif is present at residues 91–114; sequence HFDYYQPESYIPRRDLFIEKDSSI. The Helicase C-terminal domain occupies 433 to 607; that stretch reads QVQDLFDEIK…ELKLRDDETK (175 aa). The 36-residue stretch at 623–658 folds into the UVR domain; sequence EKIIKELDKKMRECAKNLDFEEAMHLRDEIAKLRTL.

The protein belongs to the UvrB family. As to quaternary structure, forms a heterotetramer with UvrA during the search for lesions. Interacts with UvrC in an incision complex.

The protein localises to the cytoplasm. The UvrABC repair system catalyzes the recognition and processing of DNA lesions. A damage recognition complex composed of 2 UvrA and 2 UvrB subunits scans DNA for abnormalities. Upon binding of the UvrA(2)B(2) complex to a putative damaged site, the DNA wraps around one UvrB monomer. DNA wrap is dependent on ATP binding by UvrB and probably causes local melting of the DNA helix, facilitating insertion of UvrB beta-hairpin between the DNA strands. Then UvrB probes one DNA strand for the presence of a lesion. If a lesion is found the UvrA subunits dissociate and the UvrB-DNA preincision complex is formed. This complex is subsequently bound by UvrC and the second UvrB is released. If no lesion is found, the DNA wraps around the other UvrB subunit that will check the other stand for damage. This is UvrABC system protein B from Helicobacter acinonychis (strain Sheeba).